The chain runs to 251 residues: Ubiquinone/menaquinone biosynthesis C-methyltransferase UbiE (251 aa).

Residues Thr-74, Asp-95, and 123 to 124 contribute to the S-adenosyl-L-methionine site; that span reads DA.

The protein belongs to the class I-like SAM-binding methyltransferase superfamily. MenG/UbiE family.

It carries out the reaction a 2-demethylmenaquinol + S-adenosyl-L-methionine = a menaquinol + S-adenosyl-L-homocysteine + H(+). The catalysed reaction is a 2-methoxy-6-(all-trans-polyprenyl)benzene-1,4-diol + S-adenosyl-L-methionine = a 5-methoxy-2-methyl-3-(all-trans-polyprenyl)benzene-1,4-diol + S-adenosyl-L-homocysteine + H(+). It participates in quinol/quinone metabolism; menaquinone biosynthesis; menaquinol from 1,4-dihydroxy-2-naphthoate: step 2/2. The protein operates within cofactor biosynthesis; ubiquinone biosynthesis. Functionally, methyltransferase required for the conversion of demethylmenaquinol (DMKH2) to menaquinol (MKH2) and the conversion of 2-polyprenyl-6-methoxy-1,4-benzoquinol (DDMQH2) to 2-polyprenyl-3-methyl-6-methoxy-1,4-benzoquinol (DMQH2). This is Ubiquinone/menaquinone biosynthesis C-methyltransferase UbiE from Idiomarina loihiensis (strain ATCC BAA-735 / DSM 15497 / L2-TR).